A 436-amino-acid chain; its full sequence is 5-methylthioadenosine/S-adenosylhomocysteine deaminase (436 aa).

H66 and H68 together coordinate Zn(2+). 4 residues coordinate substrate: E95, R147, R161, and H187. A Zn(2+)-binding site is contributed by H214. Substrate is bound by residues E217 and D303. D303 contacts Zn(2+).

The protein belongs to the metallo-dependent hydrolases superfamily. MTA/SAH deaminase family. Zn(2+) is required as a cofactor.

The catalysed reaction is S-adenosyl-L-homocysteine + H2O + H(+) = S-inosyl-L-homocysteine + NH4(+). The enzyme catalyses S-methyl-5'-thioadenosine + H2O + H(+) = S-methyl-5'-thioinosine + NH4(+). Functionally, catalyzes the deamination of 5-methylthioadenosine and S-adenosyl-L-homocysteine into 5-methylthioinosine and S-inosyl-L-homocysteine, respectively. Is also able to deaminate adenosine. The chain is 5-methylthioadenosine/S-adenosylhomocysteine deaminase from Symbiobacterium thermophilum (strain DSM 24528 / JCM 14929 / IAM 14863 / T).